The following is a 298-amino-acid chain: Ribosomal RNA small subunit methyltransferase H (298 aa).

Residues Gly-35–His-37, Asp-55, Phe-82, Asp-100, and Gln-107 each bind S-adenosyl-L-methionine.

Belongs to the methyltransferase superfamily. RsmH family.

It localises to the cytoplasm. The enzyme catalyses cytidine(1402) in 16S rRNA + S-adenosyl-L-methionine = N(4)-methylcytidine(1402) in 16S rRNA + S-adenosyl-L-homocysteine + H(+). In terms of biological role, specifically methylates the N4 position of cytidine in position 1402 (C1402) of 16S rRNA. The chain is Ribosomal RNA small subunit methyltransferase H from Chlamydia felis (strain Fe/C-56) (Chlamydophila felis).